The primary structure comprises 646 residues: Threonine--tRNA ligase (646 aa).

One can recognise a TGS domain in the interval 1-61 (MIKITFPDGS…NEDANFVLYK (61 aa)). Positions 242 to 541 (DHRKIGKEMD…LIEHTAGKFP (300 aa)) are catalytic. Positions 337, 388, and 518 each coordinate Zn(2+).

The protein belongs to the class-II aminoacyl-tRNA synthetase family. As to quaternary structure, homodimer. Zn(2+) serves as cofactor.

The protein localises to the cytoplasm. The enzyme catalyses tRNA(Thr) + L-threonine + ATP = L-threonyl-tRNA(Thr) + AMP + diphosphate + H(+). Functionally, catalyzes the attachment of threonine to tRNA(Thr) in a two-step reaction: L-threonine is first activated by ATP to form Thr-AMP and then transferred to the acceptor end of tRNA(Thr). Also edits incorrectly charged L-seryl-tRNA(Thr). This Phocaeicola vulgatus (strain ATCC 8482 / DSM 1447 / JCM 5826 / CCUG 4940 / NBRC 14291 / NCTC 11154) (Bacteroides vulgatus) protein is Threonine--tRNA ligase.